A 225-amino-acid chain; its full sequence is 2-C-methyl-D-erythritol 4-phosphate cytidylyltransferase (225 aa).

This sequence belongs to the IspD/TarI cytidylyltransferase family. IspD subfamily.

The catalysed reaction is 2-C-methyl-D-erythritol 4-phosphate + CTP + H(+) = 4-CDP-2-C-methyl-D-erythritol + diphosphate. Its pathway is isoprenoid biosynthesis; isopentenyl diphosphate biosynthesis via DXP pathway; isopentenyl diphosphate from 1-deoxy-D-xylulose 5-phosphate: step 2/6. Functionally, catalyzes the formation of 4-diphosphocytidyl-2-C-methyl-D-erythritol from CTP and 2-C-methyl-D-erythritol 4-phosphate (MEP). The protein is 2-C-methyl-D-erythritol 4-phosphate cytidylyltransferase of Cereibacter sphaeroides (strain ATCC 17029 / ATH 2.4.9) (Rhodobacter sphaeroides).